A 37-amino-acid polypeptide reads, in one-letter code: Large ribosomal subunit protein bL36 (37 aa).

It belongs to the bacterial ribosomal protein bL36 family.

This Ureaplasma urealyticum serovar 10 (strain ATCC 33699 / Western) protein is Large ribosomal subunit protein bL36.